A 523-amino-acid chain; its full sequence is Exodeoxyribonuclease 7 large subunit (523 aa).

Positions 502–523 are disordered; that stretch reads PGASPAARTRAGKAKADQGSLF.

Belongs to the XseA family. In terms of assembly, heterooligomer composed of large and small subunits.

The protein localises to the cytoplasm. The enzyme catalyses Exonucleolytic cleavage in either 5'- to 3'- or 3'- to 5'-direction to yield nucleoside 5'-phosphates.. Functionally, bidirectionally degrades single-stranded DNA into large acid-insoluble oligonucleotides, which are then degraded further into small acid-soluble oligonucleotides. The sequence is that of Exodeoxyribonuclease 7 large subunit from Rhodospirillum centenum (strain ATCC 51521 / SW).